The chain runs to 387 residues: Flap endonuclease 1 (387 aa).

The N-domain stretch occupies residues 1 to 104 (MGILGLSKLI…GELAKRAERR (104 aa)). Aspartate 34 contacts Mg(2+). DNA contacts are provided by arginine 47 and arginine 70. Positions 86, 158, 160, 179, and 181 each coordinate Mg(2+). The segment at 122-253 (GIEKFNRRLV…KRAIELINNY (132 aa)) is I-domain. DNA is bound at residue glutamate 158. DNA is bound by residues glycine 231 and aspartate 233. Aspartate 233 contacts Mg(2+). The interval 336–344 (TQVRLDSFF) is interaction with PCNA. Residues 345–387 (KTLPSTPNATNAAKRKAEEAKKSANNKKAKTSGGGGGRGRRPK) form a disordered region.

Belongs to the XPG/RAD2 endonuclease family. FEN1 subfamily. In terms of assembly, interacts with PCNA. Three molecules of FEN1 bind to one PCNA trimer with each molecule binding to one PCNA monomer. PCNA stimulates the nuclease activity without altering cleavage specificity. Requires Mg(2+) as cofactor. Phosphorylated. Phosphorylation upon DNA damage induces relocalization to the nuclear plasma.

It is found in the nucleus. Its subcellular location is the nucleolus. It localises to the nucleoplasm. The protein resides in the mitochondrion. Its function is as follows. Structure-specific nuclease with 5'-flap endonuclease and 5'-3' exonuclease activities involved in DNA replication and repair. During DNA replication, cleaves the 5'-overhanging flap structure that is generated by displacement synthesis when DNA polymerase encounters the 5'-end of a downstream Okazaki fragment. It enters the flap from the 5'-end and then tracks to cleave the flap base, leaving a nick for ligation. Also involved in the long patch base excision repair (LP-BER) pathway, by cleaving within the apurinic/apyrimidinic (AP) site-terminated flap. Acts as a genome stabilization factor that prevents flaps from equilibrating into structures that lead to duplications and deletions. Also possesses 5'-3' exonuclease activity on nicked or gapped double-stranded DNA, and exhibits RNase H activity. Also involved in replication and repair of rDNA and in repairing mitochondrial DNA. This is Flap endonuclease 1 from Drosophila yakuba (Fruit fly).